Here is a 764-residue protein sequence, read N- to C-terminus: Phenylalanine--tRNA ligase beta subunit (764 aa).

Residues 38–148 (CIAPKNVVVG…GELVLGKELH (111 aa)) enclose the tRNA-binding domain. Positions 375–455 (LKDCALTFQL…RFVGIDNLVS (81 aa)) constitute a B5 domain. 4 residues coordinate Mg(2+): Asp433, Asp439, Glu442, and Glu443. Residues 673 to 763 (SIYPSSVRDL…LEKEFNARLK (91 aa)) form the FDX-ACB domain.

It belongs to the phenylalanyl-tRNA synthetase beta subunit family. Type 1 subfamily. Tetramer of two alpha and two beta subunits. Mg(2+) serves as cofactor.

Its subcellular location is the cytoplasm. The enzyme catalyses tRNA(Phe) + L-phenylalanine + ATP = L-phenylalanyl-tRNA(Phe) + AMP + diphosphate + H(+). In Helicobacter pylori (strain J99 / ATCC 700824) (Campylobacter pylori J99), this protein is Phenylalanine--tRNA ligase beta subunit (pheT).